The chain runs to 533 residues: Methyl-accepting chemotaxis protein IV (533 aa).

At 1 to 6 the chain is on the cytoplasmic side; sequence MFNRIR. The chain crosses the membrane as a helical span at residues 7–33; the sequence is ISTTLFLILILCGILQIGSNGMSFWAF. The Periplasmic segment spans residues 34 to 188; sequence RDDLQRLNQV…AQSQRNYQIS (155 aa). A helical transmembrane segment spans residues 189-209; that stretch reads ALVFISMIIVAAIYISSALWW. Topologically, residues 210–533 are cytoplasmic; it reads TRKMIVQPLA…VQLQIAPVVS (324 aa). The HAMP domain occupies 212-264; the sequence is KMIVQPLAIIGSHFDSIAAGNLARPIAVYGRNEITAIFASLKTMQQALRGTVS. A Methyl-accepting transducer domain is found at 269 to 498; that stretch reads GSQEMHIGIA…EAAVATEQLA (230 aa). Glutamate methyl ester (Gln) is present on residues Gln-293, Gln-300, and Gln-307. The residue at position 489 (Glu-489) is a Glutamate methyl ester (Glu).

Belongs to the methyl-accepting chemotaxis (MCP) protein family.

The protein localises to the cell inner membrane. Functionally, mediates taxis toward dipeptides via an interaction with the periplasmic dipeptide-binding protein. Its function is as follows. Chemotactic-signal transducers respond to changes in the concentration of attractants and repellents in the environment, transduce a signal from the outside to the inside of the cell, and facilitate sensory adaptation through the variation of the level of methylation. Attractants increase the level of methylation while repellents decrease the level of methylation, the methyl groups are added by the methyltransferase CheR and removed by the methylesterase CheB. The sequence is that of Methyl-accepting chemotaxis protein IV (tap) from Escherichia coli (strain K12).